Consider the following 47-residue polypeptide: Cytochrome b559 subunit beta (47 aa).

The chain crosses the membrane as a helical span at residues 22-38 (WLAVHTLAIPTVFFLGA). H26 is a binding site for heme.

This sequence belongs to the PsbE/PsbF family. Heterodimer of an alpha subunit and a beta subunit. PSII is composed of 1 copy each of membrane proteins PsbA, PsbB, PsbC, PsbD, PsbE, PsbF, PsbH, PsbI, PsbJ, PsbK, PsbL, PsbM, PsbT, PsbX, PsbY, PsbZ, Psb30/Ycf12, peripheral proteins PsbO, CyanoQ (PsbQ), PsbU, PsbV and a large number of cofactors. It forms dimeric complexes. It depends on heme b as a cofactor.

It localises to the cellular thylakoid membrane. Its function is as follows. This b-type cytochrome is tightly associated with the reaction center of photosystem II (PSII). PSII is a light-driven water:plastoquinone oxidoreductase that uses light energy to abstract electrons from H(2)O, generating O(2) and a proton gradient subsequently used for ATP formation. It consists of a core antenna complex that captures photons, and an electron transfer chain that converts photonic excitation into a charge separation. The protein is Cytochrome b559 subunit beta of Synechococcus sp. (strain JA-3-3Ab) (Cyanobacteria bacterium Yellowstone A-Prime).